Reading from the N-terminus, the 65-residue chain is Large ribosomal subunit protein uL29 (65 aa).

This sequence belongs to the universal ribosomal protein uL29 family.

The polypeptide is Large ribosomal subunit protein uL29 (Methylococcus capsulatus (strain ATCC 33009 / NCIMB 11132 / Bath)).